The chain runs to 108 residues: Tetrahydromethanopterin S-methyltransferase subunit B (108 aa).

A helical transmembrane segment spans residues 79 to 99; it reads GMFFGFWVTMAILVLVTILAV.

Belongs to the MtrB family. As to quaternary structure, the complex is composed of 8 subunits; MtrA, MtrB, MtrC, MtrD, MtrE, MtrF, MtrG and MtrH.

It is found in the cell membrane. It carries out the reaction 5-methyl-5,6,7,8-tetrahydromethanopterin + coenzyme M + 2 Na(+)(in) = 5,6,7,8-tetrahydromethanopterin + methyl-coenzyme M + 2 Na(+)(out). Its pathway is one-carbon metabolism; methanogenesis from CO(2); methyl-coenzyme M from 5,10-methylene-5,6,7,8-tetrahydromethanopterin: step 2/2. Its function is as follows. Part of a complex that catalyzes the formation of methyl-coenzyme M and tetrahydromethanopterin from coenzyme M and methyl-tetrahydromethanopterin. This is an energy-conserving, sodium-ion translocating step. The polypeptide is Tetrahydromethanopterin S-methyltransferase subunit B (Methanococcus maripaludis (strain C5 / ATCC BAA-1333)).